Consider the following 646-residue polypeptide: MTDNANSQLVVRAKFNFQQTNEDELSFSKGDVIHVTRVEEGGWWEGTHNGRTGWFPSNYVREIKPSEKPVSPKSGTLKSPPKGFDTTAINKSYYNVVLQNILETEHEYSKELQSVLSTYLWPLQTSEKLSSANTSYLMGNLEEISSFQQVLVQSLEECTKSPEAQQRVGGCFLSLMPQMRTLYLAYCANHPSAVSVLTEHSEDLGEFMETKGASSPGILVLTTGLSKPFMRLDKYPTLLKELERHMEDYHPDRQDIQKSMTAFKNLSAQCQEVRKRKELELQILTEPIRSWEGDDIKTLGSVTYMSQVTIQCAGSEEKNERYLLLFPNLLLMLSASPRMSGFIYQGKLPTTGMTITKLEDSENHRNAFEISGSMIERILVSCNNQQDLHEWVEHLQRQTKVTSVSNPTIKPHSVPSHTLPSHPLTPSSKHADSKPVALTPAYHTLPHPSHHGTPHTTISWGPLEPPKTPKPWSLSCLRPAPPLRPSAALCYKEDLSRSPKTMKKLLPKRKPERKPSDEEFAVRKSTAALEEDAQILKVIEAYCTSAKTRQTLNSSSRKESAPQVLLPEEEKIIVEETKSNGQTVIEEKSLVDTVYALKDEVQELRQDNKKMKKSLEEEQRARKDLEKLVRKVLKNMNDPAWDETNL.

Residues 6–65 (NSQLVVRAKFNFQQTNEDELSFSKGDVIHVTRVEEGGWWEGTHNGRTGWFPSNYVREIKP) enclose the SH3 domain. Residues serine 7, serine 71, and serine 79 each carry the phosphoserine modification. Residues 93–273 (YYNVVLQNIL…KNLSAQCQEV (181 aa)) form the DH domain. The PH domain maps to 295–400 (DIKTLGSVTY…WVEHLQRQTK (106 aa)). Phosphoserine is present on serine 340. Disordered regions lie at residues 402–464 (TSVS…GPLE) and 500–520 (KTMKKLLPKRKPERKPSDEEF). Residues 415 to 428 (PSHTLPSHPLTPSS) are compositionally biased toward polar residues. The segment covering 500-512 (KTMKKLLPKRKPE) has biased composition (basic residues). 2 positions are modified to phosphoserine: serine 516 and serine 560.

In terms of assembly, interacts with SCRIB; interaction is direct and may play a role in regulation of apoptosis. Interacts with PAK kinases through the SH3 domain. Interacts with GIT1 and probably TGFB1I1. Interacts with ITCH and PARVB. Interacts with FRMPD4 (via N-terminus). Interacts with CaMK1. Interacts with PTK2/FAK1 and RAC1. Interacts with BIN2. Interacts with YWHAZ. Interacts (via PH domain) with NOX1 (via FAD-binding FR-type domain). Phosphorylated on Ser-516 by CaMK1; enhancement of GEF activity and downstream activation of RAC1. Phosphorylated by PTK2/FAK1; this promotes interaction with RAC1.

Its subcellular location is the cell junction. It is found in the focal adhesion. It localises to the cell projection. The protein localises to the ruffle. The protein resides in the cytoplasm. Its subcellular location is the cell cortex. It is found in the lamellipodium. Acts as a RAC1 guanine nucleotide exchange factor (GEF) and can induce membrane ruffling. Functions in cell migration, attachment and cell spreading. Promotes targeting of RAC1 to focal adhesions. May function as a positive regulator of apoptosis. Downstream of NMDA receptors and CaMKK-CaMK1 signaling cascade, promotes the formation of spines and synapses in hippocampal neurons. The sequence is that of Rho guanine nucleotide exchange factor 7 (Arhgef7) from Rattus norvegicus (Rat).